We begin with the raw amino-acid sequence, 284 residues long: MLIIETLPLLRQHIRRLRQEGKRVALVPTMGNLHDGHMKLVDEAKARADVVIVSIFVNPMQFDRPDDLVRYPRTLQEDCEKLNKRKVDYVFAPAVEEIYPQGLEGQTYVDVPGLSTMLEGASRPGHFRGVSTIVSKLFNLIQPDIACFGEKDFQQLALIRKMVADMSYDIEIVGVPIIRAKDGLALSSRNAYLTAEQRKIAPGLYNVMNSIAEKLIAGNRELQEIIAIAEQELNEKGFRADDIQIRDADTLLELTETSKRAVILAAAWLGQARLIDNQSVTLAQ.

Residue 30 to 37 (MGNLHDGH) participates in ATP binding. The active-site Proton donor is His37. Gln61 provides a ligand contact to (R)-pantoate. Gln61 serves as a coordination point for beta-alanine. Residue 149-152 (GEKD) coordinates ATP. Gln155 lines the (R)-pantoate pocket. Residues Ile178 and 186–189 (LSSR) each bind ATP.

Belongs to the pantothenate synthetase family. Homodimer.

The protein localises to the cytoplasm. The catalysed reaction is (R)-pantoate + beta-alanine + ATP = (R)-pantothenate + AMP + diphosphate + H(+). It participates in cofactor biosynthesis; (R)-pantothenate biosynthesis; (R)-pantothenate from (R)-pantoate and beta-alanine: step 1/1. Its function is as follows. Catalyzes the condensation of pantoate with beta-alanine in an ATP-dependent reaction via a pantoyl-adenylate intermediate. The sequence is that of Pantothenate synthetase from Salmonella paratyphi A (strain ATCC 9150 / SARB42).